The primary structure comprises 445 residues: Exodeoxyribonuclease 7 large subunit (445 aa).

Belongs to the XseA family. Heterooligomer composed of large and small subunits.

Its subcellular location is the cytoplasm. It carries out the reaction Exonucleolytic cleavage in either 5'- to 3'- or 3'- to 5'-direction to yield nucleoside 5'-phosphates.. Functionally, bidirectionally degrades single-stranded DNA into large acid-insoluble oligonucleotides, which are then degraded further into small acid-soluble oligonucleotides. This chain is Exodeoxyribonuclease 7 large subunit, found in Staphylococcus haemolyticus (strain JCSC1435).